A 119-amino-acid polypeptide reads, in one-letter code: Protein TusC (119 aa).

It belongs to the DsrF/TusC family. As to quaternary structure, heterohexamer, formed by a dimer of trimers. The hexameric TusBCD complex contains 2 copies each of TusB, TusC and TusD. The TusBCD complex interacts with TusE.

The protein localises to the cytoplasm. Its function is as follows. Part of a sulfur-relay system required for 2-thiolation of 5-methylaminomethyl-2-thiouridine (mnm(5)s(2)U) at tRNA wobble positions. The sequence is that of Protein TusC from Shigella flexneri serotype 5b (strain 8401).